A 204-amino-acid polypeptide reads, in one-letter code: MFNSLFGNLLSLVMGYLLGSLPSGYLAAHWLAGIDLREKGSGSTGATNVLRQVGKGPALAVFLIDVGKGTTAVLVARALELDDGWQVAAGLAALAGHIWPVWLGWKGGKAVATGLGMLLGISWPVGLACFGIFLTVLSFSRIVSLSSIIAALSLPLLMILRFQGNSPPAYLAVAFAAMAMVVWRHRSNLQRLLAGTEPRLGQSS.

5 helical membrane passes run 12–32 (LVMG…HWLA), 85–105 (WQVA…WLGW), 117–137 (MLLG…LTVL), 142–162 (IVSL…ILRF), and 163–183 (QGNS…MVVW).

This sequence belongs to the PlsY family. In terms of assembly, probably interacts with PlsX.

The protein resides in the cell inner membrane. It catalyses the reaction an acyl phosphate + sn-glycerol 3-phosphate = a 1-acyl-sn-glycero-3-phosphate + phosphate. It participates in lipid metabolism; phospholipid metabolism. Its function is as follows. Catalyzes the transfer of an acyl group from acyl-phosphate (acyl-PO(4)) to glycerol-3-phosphate (G3P) to form lysophosphatidic acid (LPA). This enzyme utilizes acyl-phosphate as fatty acyl donor, but not acyl-CoA or acyl-ACP. The chain is Glycerol-3-phosphate acyltransferase from Prochlorococcus marinus (strain MIT 9313).